We begin with the raw amino-acid sequence, 411 residues long: Histidine--tRNA ligase (411 aa).

This sequence belongs to the class-II aminoacyl-tRNA synthetase family. Homodimer.

It localises to the cytoplasm. It carries out the reaction tRNA(His) + L-histidine + ATP = L-histidyl-tRNA(His) + AMP + diphosphate + H(+). The polypeptide is Histidine--tRNA ligase (Dictyoglomus turgidum (strain DSM 6724 / Z-1310)).